We begin with the raw amino-acid sequence, 257 residues long: UPF0246 protein BAV2675 (257 aa).

This sequence belongs to the UPF0246 family.

The chain is UPF0246 protein BAV2675 from Bordetella avium (strain 197N).